The chain runs to 361 residues: MAPTEPWSPSPGSAPWDYSGLDGLEELELCPAGDLPYGYVYIPALYLAAFAVGLLGNAFVVWLLAGRRGPRRLVDTFVLHLAAADLGFVLTLPLWAAAAALGGRWPFGDGLCKLSSFALAGTRCAGALLLAGMSVDRYLAVVKLLEARPLRTPRCALASCCGVWAVALLAGLPSLVYRGLQPLPGGQDSQCGEEPSHAFQGLSLLLLLLTFVLPLVVTLFCYCRISRRLRRPPHVGRARRNSLRIIFAIESTFVGSWLPFSALRAVFHLARLGALPLPCPLLLALRWGLTIATCLAFVNSCANPLIYLLLDRSFRARALDGACGRTGRLARRISSASSLSRDDSSVFRCRAQAANTASASW.

Residues 1–39 are Extracellular-facing; sequence MAPTEPWSPSPGSAPWDYSGLDGLEELELCPAGDLPYGY. Residues 40-60 traverse the membrane as a helical segment; that stretch reads VYIPALYLAAFAVGLLGNAFV. Residues 61–75 lie on the Cytoplasmic side of the membrane; that stretch reads VWLLAGRRGPRRLVD. Residues 76–96 form a helical membrane-spanning segment; the sequence is TFVLHLAAADLGFVLTLPLWA. Topologically, residues 97–126 are extracellular; that stretch reads AAAALGGRWPFGDGLCKLSSFALAGTRCAG. A helical transmembrane segment spans residues 127–147; sequence ALLLAGMSVDRYLAVVKLLEA. Over 148 to 155 the chain is Cytoplasmic; the sequence is RPLRTPRC. A helical membrane pass occupies residues 156-176; it reads ALASCCGVWAVALLAGLPSLV. The Extracellular segment spans residues 177-200; sequence YRGLQPLPGGQDSQCGEEPSHAFQ. Residues 201–220 form a helical membrane-spanning segment; that stretch reads GLSLLLLLLTFVLPLVVTLF. Residues 221–242 lie on the Cytoplasmic side of the membrane; the sequence is CYCRISRRLRRPPHVGRARRNS. The helical transmembrane segment at 243–263 threads the bilayer; the sequence is LRIIFAIESTFVGSWLPFSAL. Topologically, residues 264-289 are extracellular; sequence RAVFHLARLGALPLPCPLLLALRWGL. Residues 290 to 310 traverse the membrane as a helical segment; that stretch reads TIATCLAFVNSCANPLIYLLL. The Cytoplasmic segment spans residues 311 to 361; sequence DRSFRARALDGACGRTGRLARRISSASSLSRDDSSVFRCRAQAANTASASW.

Belongs to the G-protein coupled receptor 1 family.

The protein localises to the cell membrane. Functionally, orphan receptor. This chain is Probable G-protein coupled receptor 25 (GPR25), found in Homo sapiens (Human).